The following is a 239-amino-acid chain: MDYLGIDLSCAIGSLRNGEFPAKDCLLPLISKLLGYFLVAASMTVKLPQIMKIVDNKSVKGLSVVAFELEVIGYTISLAYCLNKDLPFSAFGELAFLLIQALILVACIYYFSQPLSVTTWVKAILYFAIAPTVFAGKIDPFLFEALYASKHLIFLSARIPQIWKNFRNKSTGQLSFLTCLMNFGGALARVFTSIQEKAPLSMLLGIVLSIFTNGIIMSQILLYRSKGNEDKLVKSKKIS.

A run of 6 helical transmembrane segments spans residues 25–45 (CLLPLISKLLGYFLVAASMTV), 62–82 (LSVVAFELEVIGYTISLAYCL), 91–111 (FGELAFLLIQALILVACIYYF), 123–143 (AILYFAIAPTVFAGKIDPFLF), 174–194 (LSFLTCLMNFGGALARVFTSI), and 202–222 (MLLGIVLSIFTNGIIMSQILL). A PQ-loop 1 domain is found at 27 to 93 (LPLISKLLGY…KDLPFSAFGE (67 aa)). The PQ-loop 2 domain occupies 150 to 205 (KHLIFLSARIPQIWKNFRNKSTGQLSFLTCLMNFGGALARVFTSIQEKAPLSMLLG).

This sequence belongs to the MPDU1 (TC 2.A.43.3) family.

The protein resides in the membrane. The sequence is that of Mannose-P-dolichol utilization defect 1 protein homolog 1 from Arabidopsis thaliana (Mouse-ear cress).